The sequence spans 134 residues: D-ribose pyranase (134 aa).

The active-site Proton donor is the H20. Substrate contacts are provided by residues D28, H101, and 123 to 125 (YCN).

Belongs to the RbsD / FucU family. RbsD subfamily. Homodecamer.

The protein resides in the cytoplasm. The catalysed reaction is beta-D-ribopyranose = beta-D-ribofuranose. It participates in carbohydrate metabolism; D-ribose degradation; D-ribose 5-phosphate from beta-D-ribopyranose: step 1/2. Functionally, catalyzes the interconversion of beta-pyran and beta-furan forms of D-ribose. The chain is D-ribose pyranase from Pseudomonas fluorescens (strain Pf0-1).